A 470-amino-acid chain; its full sequence is Putative multidrug resistance protein MdtD (470 aa).

The Periplasmic segment spans residues 1-11 (MTEFPDNTRWQ). Residues 12–32 (LWIVAFGFFMQSLDTTIVNTA) traverse the membrane as a helical segment. The Cytoplasmic portion of the chain corresponds to 33–48 (LPSMAKSLGESPLHMH). A helical membrane pass occupies residues 49 to 69 (MVVVSYVLTVAVMLPASGWLA). Residues 70-76 (DKIGVRN) lie on the Periplasmic side of the membrane. A helical transmembrane segment spans residues 77 to 97 (IFFAAIVLFTLGSLFCALSGT). The Cytoplasmic segment spans residues 98–101 (LNQL). Residues 102-124 (VLARVLQGVGGAMMVPVGRLTVM) traverse the membrane as a helical segment. Residues 125 to 137 (KIVPRAQYMAAMT) lie on the Periplasmic side of the membrane. A helical membrane pass occupies residues 138–158 (FVALPGQIGPLLGPALGGVLV). Residues 159-164 (EYASWH) are Cytoplasmic-facing. The chain crosses the membrane as a helical span at residues 165-185 (WIFLINIPVGIVGAMATFMLM). The Periplasmic segment spans residues 186-196 (PNYTIETRRFD). The chain crosses the membrane as a helical span at residues 197–217 (LPGFLLLAIGMAVLTLALDGS). Over 218-224 (KSMGISP) the chain is Cytoplasmic. The helical transmembrane segment at 225-245 (WTLAGLAAGGAAAILLYLFHA) threads the bilayer. Residues 246-262 (KKNSGALFSLRLFRTPT) are Periplasmic-facing. Residues 263–283 (FSLGLLGSFAGRIGSGMLPFM) traverse the membrane as a helical segment. The Cytoplasmic segment spans residues 284–285 (TP). The helical transmembrane segment at 286-306 (VFLQIGLGFSPFHAGLMMIPM) threads the bilayer. Residues 307–341 (VLGSMGMKRIVVQIVNRFGYRRVLVATTLGLALVS) lie on the Periplasmic side of the membrane. A helical transmembrane segment spans residues 342–362 (LLFMSVALLGWYYLLPLVLLL). The Cytoplasmic portion of the chain corresponds to 363-395 (QGMVNSARFSSMNTLTLKDLPDTLASSGNSLLS). The helical transmembrane segment at 396–416 (MIMQLSMSIGVTIAGMLLGMF) threads the bilayer. The Periplasmic portion of the chain corresponds to 417-430 (GQQHIGIDSSATHH). The helical transmembrane segment at 431 to 451 (VFMYTWLCMAVIIALPAIIFA) threads the bilayer. Residues 452–470 (RVPNDTQQNMVISRRKRSL) are Cytoplasmic-facing.

The protein belongs to the major facilitator superfamily. TCR/Tet family.

It localises to the cell inner membrane. The polypeptide is Putative multidrug resistance protein MdtD (Salmonella typhi).